A 525-amino-acid polypeptide reads, in one-letter code: MPTPPPDALDASPQPVNRGNALLVLAVFVVASCGLAYELIAGALASYLLGDSILQFSSIIGAYLFAMGIGSWVSRYVADDALLARFVDLELLVGLFGGVSAAALFLLFALESAPFRLVLYALVTVIGVLVGMEIPLVMRMLHRRQAKFSDLVSRVLTFDYLGALAVSLLFPLVLAPRLGLVRTGFLFGLCNTAIAVWTLWHFRAELGLSARLRGAMAWRAGMVGAALLAGFAASDRLTHWSERALFGDEIIHAISSPYQRLVVTRWKDDLRLYINGNLQFSSRDEYRYHEALVLPALESVRGARRVLVLGGGDGLALRQILKYPQVEHVTLVDLDPRMTSLFSHAEALVALNQHAFSDPRVTVVNADAGQWLQTAADMFDVAIVDFPDPSNFSIGKLYSVPFYRLLSRHVADTGLVVIQATSPYFAPRSYWCVDATLKEAGYRTWPYHALVPSFGEWGFILAAPGRADFRPPTTYRVPTRFLDADTTHQMFSFAPDMPRPQVEPNRLNNQSLVRYFEEDWHGVLR.

6 helical membrane-spanning segments follow: residues 21 to 41, 53 to 73, 89 to 109, 117 to 137, 155 to 175, and 180 to 200; these read ALLV…ELIA, ILQF…GSWV, LELL…LLFA, LVLY…IPLV, VLTF…LVLA, and LVRT…WTLW. Residues 220–464 form the PABS domain; that stretch reads AGMVGAALLA…GEWGFILAAP (245 aa). Residues 222 to 471 form a spermidine synthase region; that stretch reads MVGAALLAGF…AAPGRADFRP (250 aa). An S-methyl-5'-thioadenosine-binding site is contributed by Gln-259. Residues His-289 and Asp-313 each contribute to the spermidine site. Residues Asp-333 and 367-368 contribute to the S-methyl-5'-thioadenosine site; that span reads DA. Asp-385 (proton acceptor) is an active-site residue.

This sequence belongs to the spermidine/spermine synthase family. Homodimer or homotetramer.

It is found in the cell membrane. The catalysed reaction is S-adenosyl 3-(methylsulfanyl)propylamine + putrescine = S-methyl-5'-thioadenosine + spermidine + H(+). Its pathway is amine and polyamine biosynthesis; spermidine biosynthesis; spermidine from putrescine: step 1/1. Catalyzes the irreversible transfer of a propylamine group from the amino donor S-adenosylmethioninamine (decarboxy-AdoMet) to putrescine (1,4-diaminobutane) to yield spermidine. This Ralstonia nicotianae (strain ATCC BAA-1114 / GMI1000) (Ralstonia solanacearum) protein is Polyamine aminopropyltransferase 1.